We begin with the raw amino-acid sequence, 163 residues long: Cyanate hydratase (163 aa).

Catalysis depends on residues Arg103, Glu106, and Ser129.

Belongs to the cyanase family.

It carries out the reaction cyanate + hydrogencarbonate + 3 H(+) = NH4(+) + 2 CO2. Its function is as follows. Catalyzes the reaction of cyanate with bicarbonate to produce ammonia and carbon dioxide. This Talaromyces stipitatus (strain ATCC 10500 / CBS 375.48 / QM 6759 / NRRL 1006) (Penicillium stipitatum) protein is Cyanate hydratase.